Reading from the N-terminus, the 846-residue chain is Protein kintoun (846 aa).

4 disordered regions span residues 216–240 (TAEEQEPHPLAHMFPTKPPAPGKPE), 372–405 (LRHFSREDSGVELHSNSESPVEEDPDGELSDSKA), 574–631 (QALK…ESAC), and 762–846 (KKNQ…EMDD). Residues 372 to 382 (LRHFSREDSGV) show a composition bias toward basic and acidic residues. Ser380 is subject to Phosphoserine. The span at 391–400 (PVEEDPDGEL) shows a compositional bias: acidic residues. Residues 583 to 603 (GTKEEEEKGNQDQEPESDKQH) are compositionally biased toward basic and acidic residues. Composition is skewed to basic residues over residues 611–622 (KAGKKQRKRNKK) and 762–776 (KKNQKRRDLKLRAQQ). Ser780 carries the post-translational modification Phosphoserine. A compositionally biased stretch (polar residues) spans 795–809 (LKQQENQSRNCNKPN).

It belongs to the PIH1 family. Kintoun subfamily. Interacts with Pp1alpha-96A, Pp1-87B, Pp1-13C and flw.

It localises to the cytoplasm. Its function is as follows. Required for cytoplasmic pre-assembly of axonemal dyneins, thereby playing a central role in motility in cilia and flagella. Involved in pre-assembly of dynein arm complexes in the cytoplasm before intraflagellar transport loads them for the ciliary compartment. The polypeptide is Protein kintoun (Drosophila yakuba (Fruit fly)).